Here is an 89-residue protein sequence, read N- to C-terminus: Small ribosomal subunit protein uS14A (89 aa).

The protein belongs to the universal ribosomal protein uS14 family. Part of the 30S ribosomal subunit. Contacts proteins S3 and S10.

Binds 16S rRNA, required for the assembly of 30S particles and may also be responsible for determining the conformation of the 16S rRNA at the A site. This is Small ribosomal subunit protein uS14A from Lactococcus lactis subsp. lactis (strain IL1403) (Streptococcus lactis).